Here is a 180-residue protein sequence, read N- to C-terminus: E3 ubiquitin-protein ligase RNF5 (180 aa).

Ala2 bears the N-acetylalanine mark. The RING-type zinc-finger motif lies at 27–68; sequence CNICLETAREAVVSVCGHLYCWPCLHQWLETRPERQECPVCK. The segment at 79–110 is disordered; the sequence is LYGRGSQKPQDPRLKTPPRPQGQRPAPESRGG. Ser84 carries the phosphoserine modification. Thr94 bears the Phosphothreonine mark. Ser107 is subject to Phosphoserine. The next 2 membrane-spanning stretches (helical) occupy residues 118 to 138 and 160 to 180; these read GGFH…TTVF and SWQD…LLSI.

The protein belongs to the RNF5 family. As to quaternary structure, interacts with PXN. Interacts with Salmonella typhimurium sopA. Interacts with JKAMP. Interacts with STING1; the interaction of endogenous proteins is dependent on viral infection. As to expression, widely expressed.

It localises to the cell membrane. The protein localises to the mitochondrion membrane. It is found in the endoplasmic reticulum membrane. It catalyses the reaction S-ubiquitinyl-[E2 ubiquitin-conjugating enzyme]-L-cysteine + [acceptor protein]-L-lysine = [E2 ubiquitin-conjugating enzyme]-L-cysteine + N(6)-ubiquitinyl-[acceptor protein]-L-lysine.. Its pathway is protein modification; protein ubiquitination. Its function is as follows. Membrane-bound E3 ubiquitin-protein ligase that mediates ubiquitination of target proteins. May function together with E2 ubiquitin-conjugating enzymes UBE2D1/UBCH5A and UBE2D2/UBC4. Mediates ubiquitination of PXN/paxillin,thereby regulating cell motility and localization of PXN/paxillin. Catalyzes ubiquitination of Salmonella type III secreted protein sopA. Mediates the 'Lys-63'-linked polyubiquitination of JKAMP thereby regulating JKAMP function by decreasing its association with components of the proteasome and ERAD; the ubiquitination appears to involve E2 ubiquitin-conjugating enzyme UBE2N. Mediates the 'Lys-48'-linked polyubiquitination of STING1 at 'Lys-150' leading to its proteasomal degradation; the ubiquitination occurs in mitochondria after viral transfection and regulates antiviral responses. Catalyzes ubiquitination and subsequent degradation of ATG4B, thereby inhibiting autophagy. In Homo sapiens (Human), this protein is E3 ubiquitin-protein ligase RNF5.